The primary structure comprises 238 residues: MIAFLVLLSLAAVLQQSSGTVDFASESSNKNDYQKEIVDKHNDLRRSVKPTARNMLQMKWNSRAAQNAKRWANRCTFAHSPPYTRTVGKLRCGENIFMSSQPFAWSGVVQAWYDEVKKFVYGIGAKPPSSVTGHYTQVVWYKSHLLGCASAKCSSTKYLYVCQYCPAGNIVGSIATPYKSGPPCGDCPSACDNGLCTNPCKHNDDLSNCKTLVKKHKCQTEWIKSKCPATCFCRTEII.

Positions methionine 1–glycine 19 are cleaved as a signal peptide. Positions threonine 20 to serine 28 are excised as a propeptide. The SCP domain maps to valine 38–tyrosine 164. 8 disulfide bridges follow: cysteine 75–cysteine 153, cysteine 92–cysteine 165, cysteine 148–cysteine 162, cysteine 184–cysteine 191, cysteine 187–cysteine 196, cysteine 200–cysteine 233, cysteine 209–cysteine 227, and cysteine 218–cysteine 231. Positions cysteine 200–cysteine 233 constitute a ShKT domain.

This sequence belongs to the CRISP family. Expressed by the venom gland.

The protein localises to the secreted. Its function is as follows. Blocks olfactory (CNGA2) and retinal (CNGA1) CNG channel currents. Does not affect neither depolarization- nor caffeine-induced contraction of smooth muscle. The sequence is that of Cysteine-rich venom protein pseudechetoxin-like from Pseudonaja textilis (Eastern brown snake).